Reading from the N-terminus, the 404-residue chain is Arginine biosynthesis bifunctional protein ArgJ (404 aa).

Residues threonine 166, lysine 189, threonine 200, glutamate 280, asparagine 399, and serine 404 each contribute to the substrate site. Catalysis depends on threonine 200, which acts as the Nucleophile.

Belongs to the ArgJ family. In terms of assembly, heterotetramer of two alpha and two beta chains.

The protein localises to the cytoplasm. It catalyses the reaction N(2)-acetyl-L-ornithine + L-glutamate = N-acetyl-L-glutamate + L-ornithine. It carries out the reaction L-glutamate + acetyl-CoA = N-acetyl-L-glutamate + CoA + H(+). It participates in amino-acid biosynthesis; L-arginine biosynthesis; L-ornithine and N-acetyl-L-glutamate from L-glutamate and N(2)-acetyl-L-ornithine (cyclic): step 1/1. The protein operates within amino-acid biosynthesis; L-arginine biosynthesis; N(2)-acetyl-L-ornithine from L-glutamate: step 1/4. Catalyzes two activities which are involved in the cyclic version of arginine biosynthesis: the synthesis of N-acetylglutamate from glutamate and acetyl-CoA as the acetyl donor, and of ornithine by transacetylation between N(2)-acetylornithine and glutamate. The chain is Arginine biosynthesis bifunctional protein ArgJ from Mycobacterium bovis (strain ATCC BAA-935 / AF2122/97).